The primary structure comprises 488 residues: Malonate-semialdehyde dehydrogenase 2 (488 aa).

Phenylalanine 155, lysine 179, glutamate 182, arginine 183, and serine 232 together coordinate NAD(+). The active-site Nucleophile is cysteine 287. Residue glutamate 387 participates in NAD(+) binding.

It belongs to the aldehyde dehydrogenase family. IolA subfamily. In terms of assembly, homotetramer.

It catalyses the reaction 3-oxopropanoate + NAD(+) + CoA + H2O = hydrogencarbonate + acetyl-CoA + NADH + H(+). The enzyme catalyses 2-methyl-3-oxopropanoate + NAD(+) + CoA + H2O = propanoyl-CoA + hydrogencarbonate + NADH + H(+). Its pathway is polyol metabolism; myo-inositol degradation into acetyl-CoA; acetyl-CoA from myo-inositol: step 7/7. Functionally, catalyzes the oxidation of malonate semialdehyde (MSA) and methylmalonate semialdehyde (MMSA) into acetyl-CoA and propanoyl-CoA, respectively. Is involved in a myo-inositol catabolic pathway. Bicarbonate, and not CO2, is the end-product of the enzymatic reaction. The sequence is that of Malonate-semialdehyde dehydrogenase 2 from Bacillus cereus (strain ZK / E33L).